Consider the following 75-residue polypeptide: Tautomerase PptA (75 aa).

P2 serves as the catalytic Proton acceptor; via imino nitrogen.

This sequence belongs to the 4-oxalocrotonate tautomerase family. PptA subfamily. In terms of assembly, homodimer.

It localises to the cytoplasm. The polypeptide is Tautomerase PptA (Shigella sonnei (strain Ss046)).